We begin with the raw amino-acid sequence, 339 residues long: ADP-L-glycero-D-manno-heptose-6-epimerase (339 aa).

Residues 11–12, 32–33, Lys39, Lys54, 75–79, and Asn92 contribute to the NADP(+) site; these read FI, DD, and EGACS. Catalysis depends on Tyr139, which acts as the Proton acceptor. Lys143 is an NADP(+) binding site. A substrate-binding site is contributed by Asn170. 2 residues coordinate NADP(+): Val171 and Lys179. The active-site Proton acceptor is Lys179. Substrate-binding positions include Arg181, His188, 202–205, Arg215, and Tyr294; that span reads FGEY.

It belongs to the NAD(P)-dependent epimerase/dehydratase family. HldD subfamily. Homopentamer. It depends on NADP(+) as a cofactor.

The catalysed reaction is ADP-D-glycero-beta-D-manno-heptose = ADP-L-glycero-beta-D-manno-heptose. It participates in nucleotide-sugar biosynthesis; ADP-L-glycero-beta-D-manno-heptose biosynthesis; ADP-L-glycero-beta-D-manno-heptose from D-glycero-beta-D-manno-heptose 7-phosphate: step 4/4. Catalyzes the interconversion between ADP-D-glycero-beta-D-manno-heptose and ADP-L-glycero-beta-D-manno-heptose via an epimerization at carbon 6 of the heptose. This is ADP-L-glycero-D-manno-heptose-6-epimerase from Polynucleobacter necessarius subsp. necessarius (strain STIR1).